We begin with the raw amino-acid sequence, 873 residues long: Polyribonucleotide nucleotidyltransferase (873 aa).

Residues D521 and D527 each coordinate Mg(2+). Residues 587–646 (PRIITTTVPVDKIGEVIGPKGKMINQIQEDTGAEIAIEDDGTVYISSEGGEAAEKAKQII) enclose the KH domain. One can recognise an S1 motif domain in the interval 658–730 (GETYKGTVVK…DRGKISLAIP (73 aa)). Residues 727-873 (LAIPGFENQE…VRRDFDPFDD (147 aa)) form a disordered region. The span at 742–857 (RRSDDRPRRD…EYREGREVRH (116 aa)) shows a compositional bias: basic and acidic residues.

It belongs to the polyribonucleotide nucleotidyltransferase family. Mg(2+) serves as cofactor.

Its subcellular location is the cytoplasm. It carries out the reaction RNA(n+1) + phosphate = RNA(n) + a ribonucleoside 5'-diphosphate. In terms of biological role, involved in mRNA degradation. Catalyzes the phosphorolysis of single-stranded polyribonucleotides processively in the 3'- to 5'-direction. The polypeptide is Polyribonucleotide nucleotidyltransferase (Bifidobacterium animalis subsp. lactis (strain AD011)).